Reading from the N-terminus, the 183-residue chain is Ubiquitin carboxyl-terminal hydrolase 17-like protein 23 (183 aa).

The region spanning 80-183 is the USP domain; the sequence is AGLQNMGNTC…KACLPGHKQV (104 aa).

Belongs to the peptidase C19 family. USP17 subfamily.

The protein localises to the nucleus. The protein resides in the endoplasmic reticulum. The sequence is that of Ubiquitin carboxyl-terminal hydrolase 17-like protein 23 (USP17L23) from Homo sapiens (Human).